A 343-amino-acid chain; its full sequence is L-threonine 3-dehydrogenase (343 aa).

Residue C40 coordinates Zn(2+). Active-site charge relay system residues include T42 and H45. Zn(2+) contacts are provided by H65, E66, C95, C98, C101, and C109. NAD(+) contacts are provided by residues I177, D197, R202, L264 to I266, and I288 to Y289.

Belongs to the zinc-containing alcohol dehydrogenase family. As to quaternary structure, homotetramer. The cofactor is Zn(2+).

Its subcellular location is the cytoplasm. The catalysed reaction is L-threonine + NAD(+) = (2S)-2-amino-3-oxobutanoate + NADH + H(+). The protein operates within amino-acid degradation; L-threonine degradation via oxydo-reductase pathway; glycine from L-threonine: step 1/2. Functionally, catalyzes the NAD(+)-dependent oxidation of L-threonine to 2-amino-3-ketobutyrate. This is L-threonine 3-dehydrogenase from Aliivibrio salmonicida (strain LFI1238) (Vibrio salmonicida (strain LFI1238)).